The chain runs to 259 residues: Ribonuclease HII (259 aa).

The 189-residue stretch at 70–258 (TLIAGIDEVG…VKSLVLGKKE (189 aa)) folds into the RNase H type-2 domain. Residues Asp76, Glu77, and Asp168 each contribute to the a divalent metal cation site.

Belongs to the RNase HII family. Requires Mn(2+) as cofactor. It depends on Mg(2+) as a cofactor.

The protein resides in the cytoplasm. The enzyme catalyses Endonucleolytic cleavage to 5'-phosphomonoester.. Functionally, endonuclease that specifically degrades the RNA of RNA-DNA hybrids. The chain is Ribonuclease HII from Streptococcus pneumoniae serotype 4 (strain ATCC BAA-334 / TIGR4).